The primary structure comprises 78 residues: Sec-independent protein translocase protein TatA (78 aa).

Residues 1-21 traverse the membrane as a helical segment; that stretch reads MGMPSMPELLIILLIVVLLFG. A disordered region spans residues 46–78; it reads DEEEVATENKKEIEEKTTASTTKTTADQDTTKA. The segment covering 52-62 has biased composition (basic and acidic residues); the sequence is TENKKEIEEKT. Residues 63-78 show a composition bias toward low complexity; that stretch reads TASTTKTTADQDTTKA.

This sequence belongs to the TatA/E family. The Tat system comprises two distinct complexes: a TatABC complex, containing multiple copies of TatA, TatB and TatC subunits, and a separate TatA complex, containing only TatA subunits. Substrates initially bind to the TatABC complex, which probably triggers association of the separate TatA complex to form the active translocon.

Its subcellular location is the cell inner membrane. Part of the twin-arginine translocation (Tat) system that transports large folded proteins containing a characteristic twin-arginine motif in their signal peptide across membranes. TatA could form the protein-conducting channel of the Tat system. This chain is Sec-independent protein translocase protein TatA, found in Nitratiruptor sp. (strain SB155-2).